The following is a 350-amino-acid chain: Histidinol-phosphate aminotransferase (350 aa).

At Lys220 the chain carries N6-(pyridoxal phosphate)lysine.

The protein belongs to the class-II pyridoxal-phosphate-dependent aminotransferase family. Histidinol-phosphate aminotransferase subfamily. In terms of assembly, homodimer. The cofactor is pyridoxal 5'-phosphate.

The enzyme catalyses L-histidinol phosphate + 2-oxoglutarate = 3-(imidazol-4-yl)-2-oxopropyl phosphate + L-glutamate. It participates in amino-acid biosynthesis; L-histidine biosynthesis; L-histidine from 5-phospho-alpha-D-ribose 1-diphosphate: step 7/9. In Macrococcus caseolyticus (strain JCSC5402) (Macrococcoides caseolyticum), this protein is Histidinol-phosphate aminotransferase.